We begin with the raw amino-acid sequence, 374 residues long: Proton-coupled zinc antiporter SLC30A8 (374 aa).

The Cytoplasmic portion of the chain corresponds to 1 to 67 (MKGSEEAYLV…QREQTFAKKK (67 aa)). Residues 18–48 (YSLTKDSEKNHPSKPPLQDEENPQSKYHCHN) are disordered. Residues His-45, Cys-46, and His-47 each contribute to the Zn(2+) site. The HCH Motif; seals regulatory zinc-binding pocket signature appears at 45-47 (HCH). A helical transmembrane segment spans residues 68–88 (LCIASLICFVFISAEIVGGYI). Residues 89-91 (AGS) are Lumenal, vesicle-facing. The helical transmembrane segment at 92-112 (LAVVTDAAHLLVDLSSFFISL) threads the bilayer. Positions 100, 104, and 131 each coordinate Zn(2+). Topologically, residues 113 to 134 (CSLWLSSKSSTTRLTFGWHRAE) are cytoplasmic. A helical membrane pass occupies residues 135–155 (ILGALMSVITIWLVTGVLVYL). The Lumenal, vesicle portion of the chain corresponds to 156–169 (ACERLIRPDYTIDG). Residues 170–190 (TVMLITSACALGANLVLALIL) traverse the membrane as a helical segment. Over 191 to 222 (HQSGHGHSHAGGKHEHMASEYKPQTNASIRAA) the chain is Cytoplasmic. A helical transmembrane segment spans residues 223 to 243 (FIHVIGDLFQSISVLISALII). Zn(2+) contacts are provided by His-225 and Asp-229. Over 244 to 251 (YFKPEYKM) the chain is Lumenal, vesicle. The chain crosses the membrane as a helical span at residues 252–272 (ADPICTFIFSIFVLITTVTVL). Over 273–374 (RDLLTVLMEG…ECMFCYEPTQ (102 aa)) the chain is Cytoplasmic. Residues His-306, His-323, His-350, Glu-357, Cys-366, and Cys-369 each contribute to the Zn(2+) site.

Belongs to the cation diffusion facilitator (CDF) transporter (TC 2.A.4) family. SLC30A subfamily. In terms of assembly, homodimer.

It is found in the cytoplasmic vesicle. Its subcellular location is the secretory vesicle membrane. The protein localises to the cell membrane. It carries out the reaction Zn(2+)(in) + 2 H(+)(out) = Zn(2+)(out) + 2 H(+)(in). Its function is as follows. Proton-coupled zinc ion antiporter mediating the entry of zinc into the lumen of pancreatic beta cell secretory granules, thereby regulating insulin secretion. The polypeptide is Proton-coupled zinc antiporter SLC30A8 (slc30a8) (Xenopus tropicalis (Western clawed frog)).